Reading from the N-terminus, the 319-residue chain is Taste receptor type 2 member 14 (319 aa).

Topologically, residues 1-7 are extracellular; the sequence is MDGVIKS. A helical membrane pass occupies residues 8–28; that stretch reads IFTFILIVEFIIGNLGNSFIV. Residues 29–55 lie on the Cytoplasmic side of the membrane; sequence LVNCIDWVKRRKISLVDQILIALAISR. The helical transmembrane segment at 56–76 threads the bilayer; that stretch reads ISLVWSIFGSWCVSVFFPALF. Residues 77-87 lie on the Extracellular side of the membrane; it reads ATEKLLRMLTN. Cholesterol-binding residues include T86 and W89. The helical transmembrane segment at 88-108 threads the bilayer; it reads IWTVTNHFSVWLATILGTFYF. The Cytoplasmic portion of the chain corresponds to 109–129; sequence LKIANFSNSIFLYLKWRVKKV. The helical transmembrane segment at 130-150 threads the bilayer; sequence VLVLLLVTLGLLFLNILLINI. At 151–184 the chain is on the extracellular side; the sequence is HINASINGYRGNMTCSSASCNFIRFSRAIALTST. N-linked (GlcNAc...) asparagine glycans are attached at residues N153 and N162. Residue A180 participates in cholesterol binding. The helical transmembrane segment at 185-205 threads the bilayer; sequence VFVLIPFTLSLATSLLLSFSL. At 206–233 the chain is on the cytoplasmic side; the sequence is WKHHKKMQHTVKGYRDVSTKAHRGVMQT. A helical membrane pass occupies residues 234–254; the sequence is VITFLLLYAVFLLTFFISIWA. The Extracellular portion of the chain corresponds to 255-263; sequence SVRLKENQI. Residues 264 to 284 form a helical membrane-spanning segment; the sequence is IILSEMMGLAYPSGHSCVLIL. Cholesterol contacts are provided by S267 and M270. Residues 285–319 are Cytoplasmic-facing; the sequence is GNKKLRQASLSVLWWLRYRFKHGEPSGHKEFRESS.

The protein belongs to the G-protein coupled receptor T2R family. In terms of assembly, core component of the TAS2R14-GNAI1 complex, consisting of TAS2R14, GNAI1, GNB1 and GNG2; within the complex interacts with GNAI1. Core component of the TAS2R14-GNAT3 complex, consisting of TAS2R14, GNAT3, GNB1 and GNG2; within the complex interacts with GNAT3. Core component of the TAS2R14-GNAS2 complex, consisting of TAS2R14, GNAS2, GNB1 and GNG2; within the complex interacts with GNAS2.

The protein localises to the membrane. The enzyme catalyses Ca(2+)(in) = Ca(2+)(out). It catalyses the reaction 3',5'-cyclic AMP(in) = 3',5'-cyclic AMP(out). With respect to regulation, basal activity is enhanced by binding to bitter tastants, such as flufenamic acid and aristolochic acid. Regulated by cholesterol in a concentration-dependent manner. In terms of biological role, gustducin-linked G-protein coupled receptor that plays a role in the perception of bitterness. The activity of this receptor stimulates GNAT3, activating the gustducin G-protein pathway. Likely plays a role in sensing the chemical composition of the gastrointestinal content and other extra-oral tissues via the inhibitory G-protein pathways. In Macaca mulatta (Rhesus macaque), this protein is Taste receptor type 2 member 14 (TAS2R14).